Reading from the N-terminus, the 91-residue chain is Small ribosomal subunit protein uS19m (91 aa).

The protein belongs to the universal ribosomal protein uS19 family. As to quaternary structure, component of the mitochondrial small ribosomal subunit (mt-SSU). Mature yeast 74S mitochondrial ribosomes consist of a small (37S) and a large (54S) subunit. The 37S small subunit contains a 15S ribosomal RNA (15S mt-rRNA) and 34 different proteins. The 54S large subunit contains a 21S rRNA (21S mt-rRNA) and 46 different proteins.

Its subcellular location is the mitochondrion. In terms of biological role, component of the mitochondrial ribosome (mitoribosome), a dedicated translation machinery responsible for the synthesis of mitochondrial genome-encoded proteins, including at least some of the essential transmembrane subunits of the mitochondrial respiratory chain. The mitoribosomes are attached to the mitochondrial inner membrane and translation products are cotranslationally integrated into the membrane. This chain is Small ribosomal subunit protein uS19m (RSM19), found in Saccharomyces cerevisiae (strain ATCC 204508 / S288c) (Baker's yeast).